A 114-amino-acid polypeptide reads, in one-letter code: T cell receptor alpha variable 3 (114 aa).

An N-terminal signal peptide occupies residues 1-20; it reads MASAPISMLAMLFTLSGLRA. The region spanning 21 to 114 is the Ig-like domain; sequence QSVAQPEDQV…SALYFCAVRD (94 aa). Cys42 and Cys110 are disulfide-bonded. N-linked (GlcNAc...) asparagine glycosylation is present at Asn87.

In terms of assembly, alpha-beta TR is a heterodimer composed of an alpha and beta chain; disulfide-linked. The alpha-beta TR is associated with the transmembrane signaling CD3 coreceptor proteins to form the TR-CD3 (TcR or TCR). The assembly of alpha-beta TR heterodimers with CD3 occurs in the endoplasmic reticulum where a single alpha-beta TR heterodimer associates with one CD3D-CD3E heterodimer, one CD3G-CD3E heterodimer and one CD247 homodimer forming a stable octameric structure. CD3D-CD3E and CD3G-CD3E heterodimers preferentially associate with TR alpha and TR beta chains, respectively. The association of the CD247 homodimer is the last step of TcR assembly in the endoplasmic reticulum and is required for transport to the cell surface.

Its subcellular location is the cell membrane. In terms of biological role, v region of the variable domain of T cell receptor (TR) alpha chain that participates in the antigen recognition. Alpha-beta T cell receptors are antigen specific receptors which are essential to the immune response and are present on the cell surface of T lymphocytes. Recognize peptide-major histocompatibility (MH) (pMH) complexes that are displayed by antigen presenting cells (APC), a prerequisite for efficient T cell adaptive immunity against pathogens. Binding of alpha-beta TR to pMH complex initiates TR-CD3 clustering on the cell surface and intracellular activation of LCK that phosphorylates the ITAM motifs of CD3G, CD3D, CD3E and CD247 enabling the recruitment of ZAP70. In turn ZAP70 phosphorylates LAT, which recruits numerous signaling molecules to form the LAT signalosome. The LAT signalosome propagates signal branching to three major signaling pathways, the calcium, the mitogen-activated protein kinase (MAPK) kinase and the nuclear factor NF-kappa-B (NF-kB) pathways, leading to the mobilization of transcription factors that are critical for gene expression and essential for T cell growth and differentiation. The T cell repertoire is generated in the thymus, by V-(D)-J rearrangement. This repertoire is then shaped by intrathymic selection events to generate a peripheral T cell pool of self-MH restricted, non-autoaggressive T cells. Post-thymic interaction of alpha-beta TR with the pMH complexes shapes TR structural and functional avidity. The sequence is that of T cell receptor alpha variable 3 from Homo sapiens (Human).